We begin with the raw amino-acid sequence, 219 residues long: Large ribosomal subunit protein uL3 (219 aa).

The segment covering 133–145 (GRASHGNSRSHNV) has biased composition (polar residues). A disordered region spans residues 133 to 153 (GRASHGNSRSHNVPGSIGMAQ). Q153 carries the N5-methylglutamine modification.

It belongs to the universal ribosomal protein uL3 family. As to quaternary structure, part of the 50S ribosomal subunit. Forms a cluster with proteins L14 and L19. Methylated by PrmB.

One of the primary rRNA binding proteins, it binds directly near the 3'-end of the 23S rRNA, where it nucleates assembly of the 50S subunit. This chain is Large ribosomal subunit protein uL3, found in Paraburkholderia phymatum (strain DSM 17167 / CIP 108236 / LMG 21445 / STM815) (Burkholderia phymatum).